Here is a 279-residue protein sequence, read N- to C-terminus: Energy-coupling factor transporter ATP-binding protein EcfA (279 aa).

Residues V4–R239 enclose the ABC transporter domain. G37 to S44 provides a ligand contact to ATP.

Belongs to the ABC transporter superfamily. Energy-coupling factor EcfA family. In terms of assembly, forms a stable energy-coupling factor (ECF) transporter complex composed of 2 membrane-embedded substrate-binding proteins (S component), 2 ATP-binding proteins (A component) and 2 transmembrane proteins (T component).

It is found in the cell membrane. Functionally, ATP-binding (A) component of a common energy-coupling factor (ECF) ABC-transporter complex. Unlike classic ABC transporters this ECF transporter provides the energy necessary to transport a number of different substrates. In Methanocaldococcus jannaschii (strain ATCC 43067 / DSM 2661 / JAL-1 / JCM 10045 / NBRC 100440) (Methanococcus jannaschii), this protein is Energy-coupling factor transporter ATP-binding protein EcfA.